Here is a 348-residue protein sequence, read N- to C-terminus: A-kinase anchor protein 7 isoform gamma (348 aa).

A disordered region spans residues 1–25 (MERPEAGGINSNECENVSRKKKMSE). Residues Thr-129 and 219–221 (HLT) each bind AMP. CMP contacts are provided by residues Thr-129 and 219-221 (HLT). The PKA-RII-alpha subunit binding domain stretch occupies residues 294-348 (AELVRLSKRLVENAVLKAVQQYLEETQNKNKPGEGSSVKTEAADQNGNDNENNRK). The segment at 295 to 319 (ELVRLSKRLVENAVLKAVQQYLEET) is RI-alpha-binding. Positions 296–309 (LVRLSKRLVENAVL) are RII-binding. Residues 316–348 (LEETQNKNKPGEGSSVKTEAADQNGNDNENNRK) form a disordered region. A compositionally biased stretch (polar residues) spans 330–348 (SVKTEAADQNGNDNENNRK).

Binds cAMP-dependent protein kinase (PKA). Interacts with PRKCA; only the cytoplasmic form is capable of interacting with PRKCA. Expressed in brain, heart, lung, pancreas and placenta.

Its subcellular location is the nucleus. It localises to the cytoplasm. In terms of biological role, probably targets cAMP-dependent protein kinase (PKA) to the cellular membrane or cytoskeletal structures. The membrane-associated form reduces epithelial sodium channel (ENaC) activity, whereas the free cytoplasmic form may negatively regulate ENaC channel feedback inhibition by intracellular sodium. This is A-kinase anchor protein 7 isoform gamma (AKAP7) from Homo sapiens (Human).